We begin with the raw amino-acid sequence, 326 residues long: uncharacterized protein (326 aa).

Y53 acts as the Proton donor in catalysis. Residue S215–K225 participates in NADP(+) binding. Residues I242 to I305 adopt a coiled-coil conformation.

Belongs to the aldo/keto reductase family. Aldo/keto reductase 2 subfamily.

This is an uncharacterized protein from Bacillus subtilis (strain 168).